The following is a 318-amino-acid chain: UDP-3-O-acylglucosamine N-acyltransferase (318 aa).

Histidine 230 serves as the catalytic Proton acceptor.

It belongs to the transferase hexapeptide repeat family. LpxD subfamily. As to quaternary structure, homotrimer.

The enzyme catalyses a UDP-3-O-[(3R)-3-hydroxyacyl]-alpha-D-glucosamine + a (3R)-hydroxyacyl-[ACP] = a UDP-2-N,3-O-bis[(3R)-3-hydroxyacyl]-alpha-D-glucosamine + holo-[ACP] + H(+). It participates in bacterial outer membrane biogenesis; LPS lipid A biosynthesis. In terms of biological role, catalyzes the N-acylation of UDP-3-O-acylglucosamine using 3-hydroxyacyl-ACP as the acyl donor. Is involved in the biosynthesis of lipid A, a phosphorylated glycolipid that anchors the lipopolysaccharide to the outer membrane of the cell. This chain is UDP-3-O-acylglucosamine N-acyltransferase, found in Wolinella succinogenes (strain ATCC 29543 / DSM 1740 / CCUG 13145 / JCM 31913 / LMG 7466 / NCTC 11488 / FDC 602W) (Vibrio succinogenes).